Reading from the N-terminus, the 260-residue chain is Indole-3-glycerol phosphate synthase (260 aa).

The protein belongs to the TrpC family.

The catalysed reaction is 1-(2-carboxyphenylamino)-1-deoxy-D-ribulose 5-phosphate + H(+) = (1S,2R)-1-C-(indol-3-yl)glycerol 3-phosphate + CO2 + H2O. It participates in amino-acid biosynthesis; L-tryptophan biosynthesis; L-tryptophan from chorismate: step 4/5. The polypeptide is Indole-3-glycerol phosphate synthase (Neisseria meningitidis serogroup B (strain ATCC BAA-335 / MC58)).